The sequence spans 107 residues: Quaternary ammonium compound-resistance protein QacC (107 aa).

3 helical membrane-spanning segments follow: residues 26-46 (FSKFIPSLGTIISFGICFYFL), 57-77 (ITYATWAGLGLVLTTVVSIII), and 84-104 (LITIVSIVLIIVGVVSLNIFG).

It belongs to the drug/metabolite transporter (DMT) superfamily. Small multidrug resistance (SMR) (TC 2.A.7.1) family.

The protein resides in the cell membrane. Functionally, multidrug exporter. Is implicated for the resistance to bacteriocidal quaternary ammonium compounds. In Staphylococcus sp. (strain ST827), this protein is Quaternary ammonium compound-resistance protein QacC.